The primary structure comprises 114 residues: Lymphotactin (114 aa).

The first 21 residues, 1–21 (MRLLLLTFLGVCCFAAWVVEG), serve as a signal peptide directing secretion. Cysteines 32 and 69 form a disulfide. The interval 87–114 (RASASKSKAETIPTQAQRSASTAVTLTG) is disordered. The segment covering 98 to 114 (IPTQAQRSASTAVTLTG) has biased composition (polar residues).

Belongs to the intercrine gamma family.

The protein resides in the secreted. In terms of biological role, chemotactic activity for lymphocytes but not for monocytes or neutrophils. In thymus, mediates medullary accumulation of thymic dendritic cells and contributes to regulatoy T cell development, playing a role in self-tolerance establishment. This chain is Lymphotactin (Xcl1), found in Rattus norvegicus (Rat).